We begin with the raw amino-acid sequence, 179 residues long: Inner membrane-spanning protein YciB (179 aa).

The next 6 membrane-spanning stretches (helical) occupy residues Phe3–Tyr23, Thr24–His44, Pro49–His69, Trp76–Trp96, Leu121–Phe141, and Phe149–Leu169.

The protein belongs to the YciB family.

Its subcellular location is the cell inner membrane. Plays a role in cell envelope biogenesis, maintenance of cell envelope integrity and membrane homeostasis. This is Inner membrane-spanning protein YciB from Cupriavidus taiwanensis (strain DSM 17343 / BCRC 17206 / CCUG 44338 / CIP 107171 / LMG 19424 / R1) (Ralstonia taiwanensis (strain LMG 19424)).